Consider the following 296-residue polypeptide: Cation-efflux pump FieF (296 aa).

Residues 1–18 lie on the Cytoplasmic side of the membrane; the sequence is MTQTSQYDFWVKLASRAS. Residues 19 to 32 traverse the membrane as a helical segment; the sequence is VATALTLITIKLLA. The Periplasmic segment spans residues 33-43; the sequence is WLYSGSASMLA. The chain crosses the membrane as a helical span at residues 44–60; that stretch reads SLTDSFADTLASIINFI. Zn(2+) contacts are provided by Asp-47, Asp-51, Asp-70, His-73, and His-77. The Cytoplasmic segment spans residues 61-83; that stretch reads AIRYAIVPADHDHRYGHGKAEPL. The chain crosses the membrane as a helical span at residues 84–105; that stretch reads AALAQSAFIMGSAFLLLFYGGE. The Periplasmic portion of the chain corresponds to 106-119; sequence RLLNPSPVENATLG. A helical membrane pass occupies residues 120–138; the sequence is VVVSVVAIVLTLALVLLQK. Topologically, residues 139 to 145 are cytoplasmic; it reads RALAATN. A helical transmembrane segment spans residues 146-160; that stretch reads STVVEADSLHYKSDL. Residues His-155 and Asp-159 each coordinate Zn(2+). Residues 161–180 lie on the Periplasmic side of the membrane; it reads FLNAAVLLALVLSQYGWWWA. A helical transmembrane segment spans residues 181–200; the sequence is DGLFAVLIACYIGQQAFDLG. Residues 201 to 296 are Cytoplasmic-facing; sequence YRSIQALLDR…DPVQVEPTTQ (96 aa). Residues His-234, Asp-235, His-250, His-263, His-285, and Asp-287 each coordinate Zn(2+).

Belongs to the cation diffusion facilitator (CDF) transporter (TC 2.A.4) family. FieF subfamily. As to quaternary structure, homodimer. The subunits are held together in a parallel orientation through zinc binding at the interface of the cytoplasmic domains.

It localises to the cell inner membrane. It catalyses the reaction Zn(2+)(in) + H(+)(out) = Zn(2+)(out) + H(+)(in). The catalysed reaction is Cd(2+)(in) + H(+)(out) = Cd(2+)(out) + H(+)(in). It carries out the reaction Fe(2+)(in) + H(+)(out) = Fe(2+)(out) + H(+)(in). Its activity is regulated as follows. Cytoplasmic zinc binding may trigger movements of two electrically repulsive cytoplasmic domains and reorient transmembrane helices, thereby modulating coordination geometry of the active site for zinc transport. It may modulate activity in response to cytoplasmic metal fluctuations. Functionally, divalent metal cation transporter which exports Zn(2+), Cd(2+) and possibly Fe(2+). Zn(2+)/H(+) antiporter capable of using the proton motive force to remove Zn(2+) from the cytoplasm. May be involved in zinc and iron detoxification by efflux. In Shewanella oneidensis (strain ATCC 700550 / JCM 31522 / CIP 106686 / LMG 19005 / NCIMB 14063 / MR-1), this protein is Cation-efflux pump FieF.